The primary structure comprises 464 residues: uncharacterized protein (464 aa).

2 disordered regions span residues 290–374 (YRKQ…ERPK) and 445–464 (ETDD…PLEE). The span at 293 to 302 (QQQWQQQQQQ) shows a compositional bias: low complexity. Residues 303–318 (RKVKTPIKKQEAKKKA) show a composition bias toward basic residues. Positions 352–367 (DMKQQQQMEKGTTSKQ) are enriched in polar residues. Residues 445 to 454 (ETDDEDEENQ) show a composition bias toward acidic residues.

This is an uncharacterized protein from Macaca fascicularis (Crab-eating macaque).